We begin with the raw amino-acid sequence, 130 residues long: DNA-directed RNA polymerase subunit omega (130 aa).

A disordered region spans residues 110–130 (EELLKGLEGLAPPEEQPEEEE).

The protein belongs to the RNA polymerase subunit omega family. The RNAP catalytic core consists of 2 alpha, 1 beta, 1 beta' and 1 omega subunit. When a sigma factor is associated with the core the holoenzyme is formed, which can initiate transcription.

It catalyses the reaction RNA(n) + a ribonucleoside 5'-triphosphate = RNA(n+1) + diphosphate. Promotes RNA polymerase assembly. Latches the N- and C-terminal regions of the beta' subunit thereby facilitating its interaction with the beta and alpha subunits. This Afipia carboxidovorans (strain ATCC 49405 / DSM 1227 / KCTC 32145 / OM5) (Oligotropha carboxidovorans) protein is DNA-directed RNA polymerase subunit omega.